Consider the following 241-residue polypeptide: Uridylate kinase (241 aa).

14 to 17 (KLSG) provides a ligand contact to ATP. Gly-56 is a binding site for UMP. Gly-57 and Arg-61 together coordinate ATP. UMP-binding positions include Asp-77 and 138–145 (TGNPFFTT). The ATP site is built by Thr-165, Tyr-171, and Asp-174.

It belongs to the UMP kinase family. In terms of assembly, homohexamer.

The protein localises to the cytoplasm. It catalyses the reaction UMP + ATP = UDP + ADP. Its pathway is pyrimidine metabolism; CTP biosynthesis via de novo pathway; UDP from UMP (UMPK route): step 1/1. Its activity is regulated as follows. Inhibited by UTP. Functionally, catalyzes the reversible phosphorylation of UMP to UDP. The sequence is that of Uridylate kinase from Psychrobacter cryohalolentis (strain ATCC BAA-1226 / DSM 17306 / VKM B-2378 / K5).